Here is a 97-residue protein sequence, read N- to C-terminus: Defensin-like protein 196 (97 aa).

The N-terminal stretch at 1–28 is a signal peptide; sequence MAKMSALSIFAIFIILVLVIFEIPEIEA. 4 cysteine pairs are disulfide-bonded: cysteine 33-cysteine 85, cysteine 46-cysteine 70, cysteine 55-cysteine 80, and cysteine 59-cysteine 82.

It belongs to the DEFL family. Protease inhibitor I18 (RTI/MTI-2) subfamily.

Its subcellular location is the secreted. The polypeptide is Defensin-like protein 196 (ATTI4) (Arabidopsis thaliana (Mouse-ear cress)).